The sequence spans 643 residues: Very long-chain fatty acid transport protein (643 aa).

The Cytoplasmic segment spans residues 1–15 (MACMHQAQLYNDLEE). The chain crosses the membrane as a helical span at residues 16 to 36 (LLTGPSVPIVAGAAGAAALTA). Over 37 to 138 (YINAKYHIAH…AIDGGNSAEH (102 aa)) the chain is Extracellular. The chain crosses the membrane as a helical span at residues 139 to 159 (LMLWLALDAIGAATSFLNWNL). Residues 160 to 249 (TGAGLIHCIK…TGLPKGVFIS (90 aa)) lie on the Cytoplasmic side of the membrane. ATP is bound at residue 235–246 (YTSGTTGLPKGV). An intramembrane segment occupies 250 to 318 (TGRELRTDWS…FWPEVVASEA (69 aa)). Residues 319 to 643 (NIIQYVGELG…QGIVDKRIRL (325 aa)) lie on the Cytoplasmic side of the membrane. The short motif at 477 to 525 (DLWFKSGDMLRQDAEGRVYFVDRLGDTFRWKSENVSTNEVADVMGTFPQ) is the FACS element.

Belongs to the ATP-dependent AMP-binding enzyme family.

Its subcellular location is the lipid droplet. It is found in the cell membrane. It localises to the peroxisome membrane. The protein localises to the peroxisome. It catalyses the reaction a very long-chain fatty acid + ATP + CoA = a very long-chain fatty acyl-CoA + AMP + diphosphate. Its function is as follows. Acyl-CoA synthetase required for both the import of long chain fatty acids (LCFAs) (C14-C18) and the activation very long chain fatty acids (VLCFAs) (C20-C26) by esterification of the fatty acids into metabolically active CoA-thioesters for subsequent degradation or incorporation into phospholipids. The transport and fatty acyl-CoA synthetase activities are genetically separable and are thus independent activities. Esterifies VLCFAs in the peroxisome matrix. The VLCFAs are actively transported into peroxisomes by a PXA1-PXA2 heterodimeric transporter in the peroxisomal membrane. This Cochliobolus heterostrophus (Southern corn leaf blight fungus) protein is Very long-chain fatty acid transport protein (FAT1).